A 251-amino-acid polypeptide reads, in one-letter code: tRNA (guanine-N(7)-)-methyltransferase (251 aa).

S-adenosyl-L-methionine-binding residues include Glu-69, Glu-94, Asp-121, and Asp-143. The active site involves Asp-143. Residues Lys-147 and Asp-179 each contribute to the substrate site.

The protein belongs to the class I-like SAM-binding methyltransferase superfamily. TrmB family.

The catalysed reaction is guanosine(46) in tRNA + S-adenosyl-L-methionine = N(7)-methylguanosine(46) in tRNA + S-adenosyl-L-homocysteine. It participates in tRNA modification; N(7)-methylguanine-tRNA biosynthesis. In terms of biological role, catalyzes the formation of N(7)-methylguanine at position 46 (m7G46) in tRNA. The protein is tRNA (guanine-N(7)-)-methyltransferase of Rhodopseudomonas palustris (strain BisB18).